The chain runs to 192 residues: Spermatogenesis-associated protein 3 (192 aa).

Over residues 1-15 the composition is skewed to basic residues; that stretch reads MKKVKKKRSEARRHR. 2 disordered regions span residues 1–65 and 161–184; these read MKKV…TTSR and SRKP…GSGG. The segment covering 19-59 has biased composition (low complexity); sequence SQHASSNSTSQQPSPESTPQQPSPESTPQQPSPESTPQHSS.

Its subcellular location is the cell projection. The protein resides in the cilium. It is found in the flagellum. In Homo sapiens (Human), this protein is Spermatogenesis-associated protein 3 (SPATA3).